Reading from the N-terminus, the 533-residue chain is CTP synthase (533 aa).

The amidoligase domain stretch occupies residues 1 to 265 (MTKFIFVTGG…ARYLVRRLGL (265 aa)). Ser13 serves as a coordination point for CTP. A UTP-binding site is contributed by Ser13. Position 14 to 19 (14 to 19 (GLGKGI)) interacts with ATP. Tyr54 contacts L-glutamine. An ATP-binding site is contributed by Asp71. Residues Asp71 and Glu139 each coordinate Mg(2+). Residues 146–148 (DIE), 186–191 (KTKPTQ), and Lys222 each bind CTP. Residues 186-191 (KTKPTQ) and Lys222 each bind UTP. The 243-residue stretch at 290-532 (EIAIVGKYVK…VRAARERKYG (243 aa)) folds into the Glutamine amidotransferase type-1 domain. Gly351 contributes to the L-glutamine binding site. The Nucleophile; for glutamine hydrolysis role is filled by Cys378. Residues 379 to 382 (FGFQ), Glu402, and Arg459 each bind L-glutamine. Active-site residues include His505 and Glu507.

Belongs to the CTP synthase family. Homotetramer.

The enzyme catalyses UTP + L-glutamine + ATP + H2O = CTP + L-glutamate + ADP + phosphate + 2 H(+). The catalysed reaction is L-glutamine + H2O = L-glutamate + NH4(+). It carries out the reaction UTP + NH4(+) + ATP = CTP + ADP + phosphate + 2 H(+). The protein operates within pyrimidine metabolism; CTP biosynthesis via de novo pathway; CTP from UDP: step 2/2. Allosterically activated by GTP, when glutamine is the substrate; GTP has no effect on the reaction when ammonia is the substrate. The allosteric effector GTP functions by stabilizing the protein conformation that binds the tetrahedral intermediate(s) formed during glutamine hydrolysis. Inhibited by the product CTP, via allosteric rather than competitive inhibition. Functionally, catalyzes the ATP-dependent amination of UTP to CTP with either L-glutamine or ammonia as the source of nitrogen. Regulates intracellular CTP levels through interactions with the four ribonucleotide triphosphates. This Thermococcus gammatolerans (strain DSM 15229 / JCM 11827 / EJ3) protein is CTP synthase.